We begin with the raw amino-acid sequence, 205 residues long: Transcriptional regulator GfcR (205 aa).

Belongs to the purine/pyrimidine phosphoribosyltransferase family. GfcR subfamily.

The polypeptide is Transcriptional regulator GfcR (Methanococcus vannielii (strain ATCC 35089 / DSM 1224 / JCM 13029 / OCM 148 / SB)).